A 142-amino-acid chain; its full sequence is Large ribosomal subunit protein uL11 (142 aa).

It belongs to the universal ribosomal protein uL11 family. In terms of assembly, part of the ribosomal stalk of the 50S ribosomal subunit. Interacts with L10 and the large rRNA to form the base of the stalk. L10 forms an elongated spine to which L12 dimers bind in a sequential fashion forming a multimeric L10(L12)X complex. In terms of processing, one or more lysine residues are methylated.

In terms of biological role, forms part of the ribosomal stalk which helps the ribosome interact with GTP-bound translation factors. This Stenotrophomonas maltophilia (strain R551-3) protein is Large ribosomal subunit protein uL11.